The chain runs to 41 residues: Trypsin inhibitor 2c (41 aa).

2 disulfide bridges follow: cysteine 11–cysteine 32 and cysteine 15–cysteine 28.

Inhibits bovine trypsin with a Ki of 0.174 nM and trypsin-like proteases from G.mellonella larvae. Has no activity against serine proteases chymotrypsin, subtilisin and elastase. Has no activity against cysteine proteases from beetle gut. The polypeptide is Trypsin inhibitor 2c (Fagopyrum esculentum (Common buckwheat)).